Here is an 87-residue protein sequence, read N- to C-terminus: NAD(P)H-quinone oxidoreductase subunit O (87 aa).

Residues 1 to 10 (MSEQTGKVDD) are compositionally biased toward basic and acidic residues. The segment at 1–26 (MSEQTGKVDDSQSPPKVQKKLRKGDL) is disordered.

The protein belongs to the complex I NdhO subunit family. NDH-1 can be composed of about 15 different subunits; different subcomplexes with different compositions have been identified which probably have different functions.

It is found in the cellular thylakoid membrane. It carries out the reaction a plastoquinone + NADH + (n+1) H(+)(in) = a plastoquinol + NAD(+) + n H(+)(out). It catalyses the reaction a plastoquinone + NADPH + (n+1) H(+)(in) = a plastoquinol + NADP(+) + n H(+)(out). Functionally, NDH-1 shuttles electrons from an unknown electron donor, via FMN and iron-sulfur (Fe-S) centers, to quinones in the respiratory and/or the photosynthetic chain. The immediate electron acceptor for the enzyme in this species is believed to be plastoquinone. Couples the redox reaction to proton translocation, and thus conserves the redox energy in a proton gradient. Cyanobacterial NDH-1 also plays a role in inorganic carbon-concentration. The polypeptide is NAD(P)H-quinone oxidoreductase subunit O (Prochlorococcus marinus (strain NATL1A)).